Here is a 405-residue protein sequence, read N- to C-terminus: Cystathionine gamma-lyase (405 aa).

3 residues coordinate substrate: R62, Y114, and R119. N6-(pyridoxal phosphate)lysine is present on K212. E339 contributes to the substrate binding site.

This sequence belongs to the trans-sulfuration enzymes family. In terms of assembly, homotetramer. Interacts with CALM in a calcium-dependent manner. Requires pyridoxal 5'-phosphate as cofactor.

It localises to the cytoplasm. The enzyme catalyses L,L-cystathionine + H2O = 2-oxobutanoate + L-cysteine + NH4(+). The catalysed reaction is L-cysteine + H2O = hydrogen sulfide + pyruvate + NH4(+) + H(+). It carries out the reaction L-homocysteine + H2O = 2-oxobutanoate + hydrogen sulfide + NH4(+) + H(+). It catalyses the reaction L-homoserine = 2-oxobutanoate + NH4(+). The enzyme catalyses L-selenocystathionine + H2O = L-selenocysteine + 2-oxobutanoate + NH4(+). It participates in amino-acid biosynthesis; L-cysteine biosynthesis; L-cysteine from L-homocysteine and L-serine: step 2/2. Catalyzes the last step in the trans-sulfuration pathway from L-methionine to L-cysteine in a pyridoxal-5'-phosphate (PLP)-dependent manner, which consists on cleaving the L,L-cystathionine molecule into L-cysteine, ammonia and 2-oxobutanoate. Part of the L-cysteine derived from the trans-sulfuration pathway is utilized for biosynthesis of the ubiquitous antioxidant glutathione. Besides its role in the conversion of L-cystathionine into L-cysteine, it utilizes L-cysteine and L-homocysteine as substrates (at much lower rates than L,L-cystathionine) to produce hydrogen sulfide (H2S). In vitro, it converts two L-cysteine molecules into lanthionine and H2S, and two L-homocysteine molecules to homolanthionine and H2S, which can be particularly relevant under conditions of severe hyperhomocysteinemia. Lanthionine and homolanthionine are structural homologs of L,L-cystathionine that differ by the absence or presence of an extra methylene group, respectively. Acts as a cysteine-protein sulfhydrase by mediating sulfhydration of target proteins: sulfhydration consists of converting -SH groups into -SSH on specific cysteine residues of target proteins such as GAPDH, PTPN1 and NF-kappa-B subunit RELA, thereby regulating their function. By generating the gasotransmitter H2S, it participates in a number of physiological processes such as vasodilation, bone protection, and inflammation. Plays an essential role in myogenesis by contributing to the biogenesis of H2S in skeletal muscle tissue. Can also accept homoserine as substrate. Catalyzes the elimination of selenocystathionine (which can be derived from the diet) to yield selenocysteine, ammonia and 2-oxobutanoate. This is Cystathionine gamma-lyase (CTH) from Sus scrofa (Pig).